A 123-amino-acid polypeptide reads, in one-letter code: Small ribosomal subunit protein uS12 (123 aa).

Residues Met-1–Gln-29 form a disordered region. Asp-89 is subject to 3-methylthioaspartic acid.

It belongs to the universal ribosomal protein uS12 family. As to quaternary structure, part of the 30S ribosomal subunit. Contacts proteins S8 and S17. May interact with IF1 in the 30S initiation complex.

In terms of biological role, with S4 and S5 plays an important role in translational accuracy. Its function is as follows. Interacts with and stabilizes bases of the 16S rRNA that are involved in tRNA selection in the A site and with the mRNA backbone. Located at the interface of the 30S and 50S subunits, it traverses the body of the 30S subunit contacting proteins on the other side and probably holding the rRNA structure together. The combined cluster of proteins S8, S12 and S17 appears to hold together the shoulder and platform of the 30S subunit. The polypeptide is Small ribosomal subunit protein uS12 (Novosphingobium aromaticivorans (strain ATCC 700278 / DSM 12444 / CCUG 56034 / CIP 105152 / NBRC 16084 / F199)).